Here is a 99-residue protein sequence, read N- to C-terminus: Protein S100-Z (99 aa).

EF-hand domains are found at residues 13-48 (IRIF…FLSC) and 50-85 (KETQ…LTVA). 9 residues coordinate Ca(2+): S20, E23, K28, E33, D63, N65, D67, E69, and E74.

This sequence belongs to the S-100 family. In terms of assembly, homodimer. Interacts with S100P. In terms of tissue distribution, highest level of expression in spleen and leukocytes.

The polypeptide is Protein S100-Z (Homo sapiens (Human)).